A 104-amino-acid polypeptide reads, in one-letter code: uncharacterized protein (104 aa).

The region spanning 3–104 (VFEKIIQGEI…HFHILSGDKH (102 aa)) is the HIT domain. A Histidine triad motif motif is present at residues 93 to 97 (HLHFH).

This is an uncharacterized protein from Helicobacter pylori (strain J99 / ATCC 700824) (Campylobacter pylori J99).